The primary structure comprises 359 residues: Peptide chain release factor 1 (359 aa).

The residue at position 235 (glutamine 235) is an N5-methylglutamine. The disordered stretch occupies residues 283 to 305; the sequence is QKAESERSASRKTQVGSGDRSER.

Belongs to the prokaryotic/mitochondrial release factor family. Post-translationally, methylated by PrmC. Methylation increases the termination efficiency of RF1.

Its subcellular location is the cytoplasm. Its function is as follows. Peptide chain release factor 1 directs the termination of translation in response to the peptide chain termination codons UAG and UAA. This is Peptide chain release factor 1 from Bartonella bacilliformis (strain ATCC 35685 / KC583 / Herrer 020/F12,63).